A 337-amino-acid polypeptide reads, in one-letter code: Protein MICROTUBULE BINDING PROTEIN 2C (337 aa).

A disordered region spans residues 80-147 (RGSMTYTKMP…STSSLTEKDR (68 aa)). A compositionally biased stretch (basic and acidic residues) spans 89 to 103 (PSRESLYKKTSEVKG). A compositionally biased stretch (polar residues) spans 120-142 (KNVSSSQDGYAENFSTPSSTSSL). Coiled-coil stretches lie at residues 143–194 (TEKD…MKKD), 223–250 (VEKL…LQGE), and 294–314 (LQKM…AKEN).

It belongs to the microtubule binding protein 2C family. Interacts with KN-1. Binds to tobacco mosaic virus movement protein (TMV-MP) at microtubules. In terms of tissue distribution, constitutively expressed in leaves.

The protein resides in the cytoplasm. It is found in the cytoskeleton. Functionally, prevents homeodomain proteins (e.g. STM) association to plasmodesmata and, consequently, cell-to-cell transport. Binds to RNA. Alters KN1 RNA-binding capacity. Regulates cytoskeleton (e.g. actin) organization that determinates cell shape. Interferes with cell-to-cell transport of tobacco mosaic virus movement protein (TMV-MP) by mediating its accumulation at microtubules, thus interfering with cell-to-cell virus movement. This is Protein MICROTUBULE BINDING PROTEIN 2C from Nicotiana tabacum (Common tobacco).